The following is a 247-amino-acid chain: Pyridoxine 5'-phosphate synthase (247 aa).

Residue asparagine 7 participates in 3-amino-2-oxopropyl phosphate binding. A 1-deoxy-D-xylulose 5-phosphate-binding site is contributed by 9–10 (DH). Arginine 18 lines the 3-amino-2-oxopropyl phosphate pocket. Histidine 43 serves as the catalytic Proton acceptor. 2 residues coordinate 1-deoxy-D-xylulose 5-phosphate: arginine 45 and histidine 50. The active-site Proton acceptor is the glutamate 70. Threonine 100 is a 1-deoxy-D-xylulose 5-phosphate binding site. Histidine 190 functions as the Proton donor in the catalytic mechanism. Residues glycine 191 and 212–213 (GH) each bind 3-amino-2-oxopropyl phosphate.

The protein belongs to the PNP synthase family. As to quaternary structure, homooctamer; tetramer of dimers.

The protein resides in the cytoplasm. It carries out the reaction 3-amino-2-oxopropyl phosphate + 1-deoxy-D-xylulose 5-phosphate = pyridoxine 5'-phosphate + phosphate + 2 H2O + H(+). The protein operates within cofactor biosynthesis; pyridoxine 5'-phosphate biosynthesis; pyridoxine 5'-phosphate from D-erythrose 4-phosphate: step 5/5. Its function is as follows. Catalyzes the complicated ring closure reaction between the two acyclic compounds 1-deoxy-D-xylulose-5-phosphate (DXP) and 3-amino-2-oxopropyl phosphate (1-amino-acetone-3-phosphate or AAP) to form pyridoxine 5'-phosphate (PNP) and inorganic phosphate. The chain is Pyridoxine 5'-phosphate synthase from Synechococcus sp. (strain WH7803).